A 335-amino-acid chain; its full sequence is Beta-ketoacyl-[acyl-carrier-protein] synthase III (335 aa).

Active-site residues include Cys-119 and His-261. The segment at 262 to 266 (QANQR) is ACP-binding. Asn-291 is a catalytic residue.

The protein belongs to the thiolase-like superfamily. FabH family. In terms of assembly, homodimer.

The protein resides in the cytoplasm. It carries out the reaction malonyl-[ACP] + acetyl-CoA + H(+) = 3-oxobutanoyl-[ACP] + CO2 + CoA. The protein operates within lipid metabolism; fatty acid biosynthesis. Its function is as follows. Catalyzes the condensation reaction of fatty acid synthesis by the addition to an acyl acceptor of two carbons from malonyl-ACP. Catalyzes the first condensation reaction which initiates fatty acid synthesis and may therefore play a role in governing the total rate of fatty acid production. Possesses both acetoacetyl-ACP synthase and acetyl transacylase activities. Its substrate specificity determines the biosynthesis of branched-chain and/or straight-chain of fatty acids. In Prochlorococcus marinus (strain MIT 9215), this protein is Beta-ketoacyl-[acyl-carrier-protein] synthase III.